We begin with the raw amino-acid sequence, 435 residues long: NADH-quinone oxidoreductase subunit D (435 aa).

This sequence belongs to the complex I 49 kDa subunit family. In terms of assembly, NDH-1 is composed of 14 different subunits. Subunits NuoB, C, D, E, F, and G constitute the peripheral sector of the complex.

The protein resides in the cell inner membrane. It carries out the reaction a quinone + NADH + 5 H(+)(in) = a quinol + NAD(+) + 4 H(+)(out). In terms of biological role, NDH-1 shuttles electrons from NADH, via FMN and iron-sulfur (Fe-S) centers, to quinones in the respiratory chain. The immediate electron acceptor for the enzyme in this species is believed to be ubiquinone. Couples the redox reaction to proton translocation (for every two electrons transferred, four hydrogen ions are translocated across the cytoplasmic membrane), and thus conserves the redox energy in a proton gradient. The polypeptide is NADH-quinone oxidoreductase subunit D (Xylella fastidiosa (strain 9a5c)).